A 267-amino-acid polypeptide reads, in one-letter code: Regulatory protein VirG (267 aa).

In terms of domain architecture, Response regulatory spans 29-143 (HVLLVDDDVA…EFLARIRVAL (115 aa)). 4-aspartylphosphate is present on Asp-78. Residues 155–255 (RRSFCFTDWT…ARGAGYFFDA (101 aa)) constitute a DNA-binding region (ompR/PhoB-type).

Phosphorylated by wide host range (WHR) VirA protein.

Its subcellular location is the cytoplasm. In terms of biological role, virG is required for the positive regulation of at least two vir loci encoded by the Ti plasmid of A.tumefaciens. This chain is Regulatory protein VirG (virG), found in Rhizobium radiobacter (Agrobacterium tumefaciens).